The following is a 156-amino-acid chain: Ribosomal RNA large subunit methyltransferase H (156 aa).

S-adenosyl-L-methionine contacts are provided by residues Leu73, Gly104, and Ile123–Leu128.

This sequence belongs to the RNA methyltransferase RlmH family. Homodimer.

The protein localises to the cytoplasm. It carries out the reaction pseudouridine(1915) in 23S rRNA + S-adenosyl-L-methionine = N(3)-methylpseudouridine(1915) in 23S rRNA + S-adenosyl-L-homocysteine + H(+). Its function is as follows. Specifically methylates the pseudouridine at position 1915 (m3Psi1915) in 23S rRNA. This Burkholderia cenocepacia (strain HI2424) protein is Ribosomal RNA large subunit methyltransferase H.